A 43-amino-acid chain; its full sequence is Photosystem II reaction center protein K (43 aa).

Residues 1-6 (MSLLLA) constitute a propeptide that is removed on maturation. Residues 18-38 (IVDVLPIIPVLFLLLAFVWQA) form a helical membrane-spanning segment.

The protein belongs to the PsbK family. PSII is composed of 1 copy each of membrane proteins PsbA, PsbB, PsbC, PsbD, PsbE, PsbF, PsbH, PsbI, PsbJ, PsbK, PsbL, PsbM, PsbT, PsbX, PsbY, PsbZ, Psb30/Ycf12, at least 3 peripheral proteins of the oxygen-evolving complex and a large number of cofactors. It forms dimeric complexes.

It is found in the plastid. The protein localises to the chloroplast thylakoid membrane. Its function is as follows. One of the components of the core complex of photosystem II (PSII). PSII is a light-driven water:plastoquinone oxidoreductase that uses light energy to abstract electrons from H(2)O, generating O(2) and a proton gradient subsequently used for ATP formation. It consists of a core antenna complex that captures photons, and an electron transfer chain that converts photonic excitation into a charge separation. This chain is Photosystem II reaction center protein K, found in Oltmannsiellopsis viridis (Marine flagellate).